A 55-amino-acid polypeptide reads, in one-letter code: Large ribosomal subunit protein bL32 (55 aa).

Residues 1 to 27 (MAVQQNKPTRSKRGMRRSHDALTTATL) are disordered.

This sequence belongs to the bacterial ribosomal protein bL32 family.

The polypeptide is Large ribosomal subunit protein bL32 (Yersinia enterocolitica serotype O:8 / biotype 1B (strain NCTC 13174 / 8081)).